The following is a 333-amino-acid chain: Phosphate acyltransferase (333 aa).

Belongs to the PlsX family. In terms of assembly, homodimer. Probably interacts with PlsY.

The protein localises to the cytoplasm. The enzyme catalyses a fatty acyl-[ACP] + phosphate = an acyl phosphate + holo-[ACP]. It participates in lipid metabolism; phospholipid metabolism. In terms of biological role, catalyzes the reversible formation of acyl-phosphate (acyl-PO(4)) from acyl-[acyl-carrier-protein] (acyl-ACP). This enzyme utilizes acyl-ACP as fatty acyl donor, but not acyl-CoA. This chain is Phosphate acyltransferase, found in Thermoanaerobacterium thermosaccharolyticum (strain ATCC 7956 / DSM 571 / NCIMB 9385 / NCA 3814 / NCTC 13789 / WDCM 00135 / 2032) (Clostridium thermosaccharolyticum).